The following is a 354-amino-acid chain: MEKRIVCLAGDGVGPEVMESAKEVLHMVERLYGHHFHLQDEYFGGSAIDLNGQPLPQRTLAACLASDAVLLGAVGGPRWDSAKERPEKGLLALRKGLGVFANVRPVTVESATAHLSPLKKADEIDFVVVRELTGGIYFSYPKERTDEVATDTLTYHRHEIERIVSYAFQLASKRKKKVTSIDKANVLESSKLWRTVTEEVALRYPDVELEHILVDAAAMELIRNPGRFDVIVTENLFGDILSDEASVLAGSLGMLPSASHAEKGPSLYEPIHGSAPDIAGKNKANPIAMMRSVAMMLGQSFGLTREGCAIEEAISAVLKLGKCTADIGGTETTTSFTKAVMQEMEEQALVGRGR.

Residue 76-87 (GPRWDSAKERPE) participates in NAD(+) binding. Substrate contacts are provided by arginine 94, arginine 104, arginine 130, and aspartate 215. Residues aspartate 215, aspartate 239, and aspartate 243 each coordinate Mg(2+). Residue 273–285 (GSAPDIAGKNKAN) participates in NAD(+) binding.

This sequence belongs to the isocitrate and isopropylmalate dehydrogenases family. LeuB type 1 subfamily. In terms of assembly, homodimer. Mg(2+) is required as a cofactor. The cofactor is Mn(2+).

It localises to the cytoplasm. The catalysed reaction is (2R,3S)-3-isopropylmalate + NAD(+) = 4-methyl-2-oxopentanoate + CO2 + NADH. The protein operates within amino-acid biosynthesis; L-leucine biosynthesis; L-leucine from 3-methyl-2-oxobutanoate: step 3/4. Functionally, catalyzes the oxidation of 3-carboxy-2-hydroxy-4-methylpentanoate (3-isopropylmalate) to 3-carboxy-4-methyl-2-oxopentanoate. The product decarboxylates to 4-methyl-2 oxopentanoate. The protein is 3-isopropylmalate dehydrogenase of Bacillus cereus (strain ATCC 10987 / NRS 248).